We begin with the raw amino-acid sequence, 375 residues long: Chaperone protein DnaJ (375 aa).

Residues 5–70 form the J domain; that stretch reads DYYELLGISR…EKRAAYDQYG (66 aa). The segment at 132–210 adopts a CR-type zinc-finger fold; the sequence is GTTKDIKIHT…CHGDGRVNKA (79 aa). C145, C148, C162, C165, C184, C187, C198, and C201 together coordinate Zn(2+). 4 CXXCXGXG motif repeats span residues 145–152, 162–169, 184–191, and 198–205; these read CDTCHGTG, CPHCHGAG, CHFCHGTG, and CKTCHGDG.

It belongs to the DnaJ family. In terms of assembly, homodimer. Requires Zn(2+) as cofactor.

Its subcellular location is the cytoplasm. Participates actively in the response to hyperosmotic and heat shock by preventing the aggregation of stress-denatured proteins and by disaggregating proteins, also in an autonomous, DnaK-independent fashion. Unfolded proteins bind initially to DnaJ; upon interaction with the DnaJ-bound protein, DnaK hydrolyzes its bound ATP, resulting in the formation of a stable complex. GrpE releases ADP from DnaK; ATP binding to DnaK triggers the release of the substrate protein, thus completing the reaction cycle. Several rounds of ATP-dependent interactions between DnaJ, DnaK and GrpE are required for fully efficient folding. Also involved, together with DnaK and GrpE, in the DNA replication of plasmids through activation of initiation proteins. The polypeptide is Chaperone protein DnaJ (Aggregatibacter actinomycetemcomitans (Actinobacillus actinomycetemcomitans)).